The chain runs to 311 residues: Malate dehydrogenase (311 aa).

NAD(+) is bound by residues 7–13 (GAAGGIG) and aspartate 34. Substrate-binding residues include arginine 81 and arginine 87. NAD(+)-binding positions include asparagine 94 and 117–119 (ITN). Residues asparagine 119 and arginine 153 each coordinate substrate. Residue histidine 177 is the Proton acceptor of the active site. Methionine 227 provides a ligand contact to NAD(+).

The protein belongs to the LDH/MDH superfamily. MDH type 1 family. As to quaternary structure, homodimer.

It catalyses the reaction (S)-malate + NAD(+) = oxaloacetate + NADH + H(+). In terms of biological role, catalyzes the reversible oxidation of malate to oxaloacetate. The chain is Malate dehydrogenase from Yersinia enterocolitica serotype O:8 / biotype 1B (strain NCTC 13174 / 8081).